A 501-amino-acid polypeptide reads, in one-letter code: Lysine--tRNA ligase (501 aa).

The Mg(2+) site is built by E404 and E411.

Belongs to the class-II aminoacyl-tRNA synthetase family. Homodimer. Mg(2+) serves as cofactor.

It is found in the cytoplasm. It carries out the reaction tRNA(Lys) + L-lysine + ATP = L-lysyl-tRNA(Lys) + AMP + diphosphate. This chain is Lysine--tRNA ligase, found in Campylobacter jejuni subsp. jejuni serotype O:6 (strain 81116 / NCTC 11828).